The chain runs to 591 residues: Inactive metallocarboxypeptidase ECM14 (591 aa).

Residues 1 to 21 form the signal peptide; it reads MRLFAHLAVLAILACAVPITA. Residues 22 to 175 constitute a propeptide that is removed on maturation; the sequence is IPSFLSNSYP…QTIYESYPSS (154 aa). The region spanning 203–523 is the Peptidase M14 domain; it reads DYQPFSVIVP…NAVMVLGRFL (321 aa). 2 residues coordinate Zn(2+): histidine 265 and glutamate 268. Residues 265 to 268, arginine 323, and 340 to 341 contribute to the substrate site; these read HARE and DR. A disulfide bridge links cysteine 334 with cysteine 357. Asparagine 350, asparagine 381, and asparagine 386 each carry an N-linked (GlcNAc...) asparagine glycan. Residue histidine 397 coordinates Zn(2+). 398–399 serves as a coordination point for substrate; it reads SY. The disordered stretch occupies residues 533–591; that stretch reads DWEDESQRPKAGEDDIPSDNELDENDDSWIPYDYRNHDDQNEGEGYDNDEWGFRRRRKR. Composition is skewed to acidic residues over residues 546 to 559 and 573 to 582; these read DDIP…ENDD and NEGEGYDNDE.

It belongs to the peptidase M14 family. Requires Zn(2+) as cofactor.

The protein localises to the vacuole. The protein resides in the secreted. Inactive carboxypeptidase that may play a role in cell wall organization and biogenesis. This is Inactive metallocarboxypeptidase ECM14 (ECM14) from Paracoccidioides brasiliensis (strain Pb03).